A 779-amino-acid chain; its full sequence is Probable phosphoketolase 2 (779 aa).

The protein belongs to the XFP family. It depends on thiamine diphosphate as a cofactor.

In Rhizobium meliloti (strain 1021) (Ensifer meliloti), this protein is Probable phosphoketolase 2.